An 800-amino-acid chain; its full sequence is Receptor like protein 26 (800 aa).

The first 19 residues, 1 to 19 (MRLHFCSLLLLYCIVFVSS), serve as a signal peptide directing secretion. Residues 20-733 (FLTTDALACL…EEEDEVIEWK (714 aa)) are Extracellular-facing. Residues N49, N61, N83, N96, N101, and N113 are each glycosylated (N-linked (GlcNAc...) asparagine). 12 LRR repeats span residues 89-113 (LHQL…EFSN), 115-138 (TRLE…ISNL), 139-161 (ILLT…VRNL), 162-185 (TKLS…LLPT), 187-212 (PFLS…SSSS), 214-235 (LVRL…ISKL), 236-259 (INLN…VFAP), 260-281 (LKSL…LSSD), 285-307 (PLSL…IFKT), 308-332 (LQNL…FWKL), 334-357 (RLSI…VLLN), and 358-381 (SSVQ…PLGS). N-linked (GlcNAc...) asparagine glycosylation is found at N145 and N160. The N-linked (GlcNAc...) asparagine glycan is linked to N207. A glycan (N-linked (GlcNAc...) asparagine) is linked at N247. Residues N342 and N357 are each glycosylated (N-linked (GlcNAc...) asparagine). Residues 382-401 (IYLSAWNNSFTGNIPLSICN) form an LRR 13; degenerate repeat. 2 N-linked (GlcNAc...) asparagine glycosylation sites follow: N388 and N401. 10 LRR repeats span residues 402-423 (RSSL…PQCL), 424-446 (SNLK…EFHS), 448-471 (AKTQ…LLNC), 472-494 (SSLR…WLKA), 495-519 (LPNL…DRGP), 522-546 (FPEL…FFVN), 591-615 (LTFY…IGLL), 616-639 (KELI…LANV), 640-663 (TELE…LGSL), and 665-688 (FLAY…QFSG). Residue N470 is glycosylated (N-linked (GlcNAc...) asparagine). 2 N-linked (GlcNAc...) asparagine glycosylation sites follow: N622 and N638. The helical transmembrane segment at 734–754 (AVFFGYWPGLLLGLVMAHVIA) threads the bilayer. The Cytoplasmic portion of the chain corresponds to 755 to 800 (SFKPKWFVKILGPAKGKQVDPVRLFMNLDSRWDSFNNKDTVEEEVI).

This sequence belongs to the RLP family.

The protein resides in the cell membrane. The polypeptide is Receptor like protein 26 (Arabidopsis thaliana (Mouse-ear cress)).